Reading from the N-terminus, the 312-residue chain is DNA-directed RNA polymerase subunit alpha (312 aa).

The segment at 1-226 (MIEFEKPIIT…EHLNLFTDLT (226 aa)) is alpha N-terminal domain (alpha-NTD). The tract at residues 242 to 312 (NDEKVLDRTI…DLGLGLKNDK (71 aa)) is alpha C-terminal domain (alpha-CTD).

This sequence belongs to the RNA polymerase alpha chain family. As to quaternary structure, homodimer. The RNAP catalytic core consists of 2 alpha, 1 beta, 1 beta' and 1 omega subunit. When a sigma factor is associated with the core the holoenzyme is formed, which can initiate transcription.

It carries out the reaction RNA(n) + a ribonucleoside 5'-triphosphate = RNA(n+1) + diphosphate. In terms of biological role, DNA-dependent RNA polymerase catalyzes the transcription of DNA into RNA using the four ribonucleoside triphosphates as substrates. In Streptococcus agalactiae serotype Ia (strain ATCC 27591 / A909 / CDC SS700), this protein is DNA-directed RNA polymerase subunit alpha.